Here is a 183-residue protein sequence, read N- to C-terminus: Early E3 20.2 kDa glycoprotein (183 aa).

5 N-linked (GlcNAc...) asparagine; by host glycosylation sites follow: Asn-30, Asn-73, Asn-117, Asn-134, and Asn-135.

Belongs to the adenoviridae E3_20 family.

The polypeptide is Early E3 20.2 kDa glycoprotein (Homo sapiens (Human)).